Consider the following 89-residue polypeptide: Small ribosomal subunit protein uS14A (89 aa).

The protein belongs to the universal ribosomal protein uS14 family. In terms of assembly, part of the 30S ribosomal subunit. Contacts proteins S3 and S10.

Binds 16S rRNA, required for the assembly of 30S particles and may also be responsible for determining the conformation of the 16S rRNA at the A site. In Listeria innocua serovar 6a (strain ATCC BAA-680 / CLIP 11262), this protein is Small ribosomal subunit protein uS14A.